A 262-amino-acid polypeptide reads, in one-letter code: Merozoite surface protein 2 (262 aa).

Positions 1–20 (MKVIKTLSIINFFIFVTFNI) are cleaved as a signal peptide. N-linked (GlcNAc...) asparagine glycosylation is found at asparagine 22 and asparagine 36. A polymorphic region region spans residues 44 to 188 (AESKPPTGTG…EQTESPELQS (145 aa)). Residues 44–223 (AESKPPTGTG…DSQKECTDGN (180 aa)) form a disordered region. A compositionally biased stretch (gly residues) spans 51 to 66 (GTGGSGSAGSGAGASA). A compositionally biased stretch (low complexity) spans 67–111 (GNGANPGADAERSPSTPATPATPATTTTTTTTNDAEASTSTSSEN). The span at 112–127 (PNHKNAETNPKGKGEV) shows a compositional bias: basic and acidic residues. Polar residues-rich tracts occupy residues 129 to 155 (KPNQ…NVPP) and 162 to 190 (KSPT…QSAP). Residue asparagine 139 is glycosylated (N-linked (GlcNAc...) asparagine). Asparagine 211 carries an N-linked (GlcNAc...) asparagine glycan. The cysteines at positions 219 and 227 are disulfide-linked. N-linked (GlcNAc...) asparagine glycosylation is found at asparagine 235 and asparagine 236. The GPI-anchor amidated asparagine moiety is linked to residue asparagine 236. The propeptide at 237–262 (SSNIASINKFVVLISATLVLSFAIFI) is removed in mature form.

The protein resides in the cell membrane. May play a role in the merozoite attachment to the erythrocyte. This Plasmodium falciparum (isolate Camp / Malaysia) protein is Merozoite surface protein 2.